The chain runs to 498 residues: L-amino acid oxidase (498 aa).

Residues 1 to 11 (SLLFLAAVGSC) form the signal peptide. C21 and C184 form a disulfide bridge. Residues 54-55 (MS), 74-75 (EA), 74-78 (EASER), R82, and 98-101 (GPMR) contribute to the FAD site. R101 lines the substrate pocket. The N-linked (GlcNAc...) asparagine glycan is linked to N183. H234 is a binding site for substrate. V272 is an FAD binding site. The cysteines at positions 342 and 423 are disulfide-linked. Y383 lines the substrate pocket. FAD contacts are provided by residues E468, 475–480 (GWIDST), and 476–480 (WIDST). Position 475 to 476 (475 to 476 (GW)) interacts with substrate.

It belongs to the flavin monoamine oxidase family. FIG1 subfamily. In terms of assembly, homodimer; non-covalently linked. FAD is required as a cofactor. N-glycosylated. Contains 18.73% carbohydrates. In terms of tissue distribution, expressed by the venom gland.

It localises to the secreted. It carries out the reaction an L-alpha-amino acid + O2 + H2O = a 2-oxocarboxylate + H2O2 + NH4(+). It catalyses the reaction L-leucine + O2 + H2O = 4-methyl-2-oxopentanoate + H2O2 + NH4(+). Strongly inhibited by glutathione, and moderately inhibited by PMSF, acetate iodine and glutamic acid. Is also inhibited by Zn(2+) ions, but not by Ca(2+), Mg(2+) and Mn(2+). In terms of biological role, catalyzes an oxidative deamination of predominantly hydrophobic and aromatic L-amino acids, thus producing hydrogen peroxide that may contribute to the diverse toxic effects of this enzyme. This enzyme shows activity on L-Leu. This enzyme inhibits platelet aggregation in human platelet rich plasma induced by ADP (IC(50)=3.2 mg/mL), and shows antibacterial activities on both Gram-positive and Gram-negative bacteria (P.aeruginosa, V.cholerae, S.aureus, E.faecalis and E.coli). These two effects are due to hydrogen peroxide, since they are inhibited by catalase. It also induces edema in mouse paw pads but does not show hemolytic activity. This protein may also have activities in hemorrhage, and apoptosis. This chain is L-amino acid oxidase, found in Bothrops pictus (Desert lancehead).